The primary structure comprises 333 residues: Perchlorate reductase subunit beta (333 aa).

A 4Fe-4S ferredoxin-type 1 domain is found at L12–G40. [4Fe-4S] cluster is bound by residues C21, C24, C27, and C31. The disordered stretch occupies residues K101–G121. 4Fe-4S ferredoxin-type domains lie at N128–Q159 and G161–V190. Residues C137, C140, and C145 each coordinate [4Fe-4S] cluster. [3Fe-4S] cluster-binding residues include C149, C170, and C176. 5 residues coordinate [4Fe-4S] cluster: C180, C197, C200, C212, and C216.

As to quaternary structure, heterotrimer of alpha, beta and gamma subunits. [3Fe-4S] cluster serves as cofactor. Requires [4Fe-4S] cluster as cofactor.

The protein resides in the periplasm. Component of the perchlorate reductase that catalyzes the reduction of perchlorate to chlorite and allows anaerobic growth on perchlorate as the sole electron acceptor. The beta subunit may be responsible for electron transfer to the catalytic alpha subunit PcrA. This chain is Perchlorate reductase subunit beta (pcrB), found in Dechloromonas aromatica (strain RCB).